The following is a 561-amino-acid chain: Asparagine synthetase [glutamine-hydrolyzing] (561 aa).

Catalysis depends on Cys2, which acts as the For GATase activity. In terms of domain architecture, Glutamine amidotransferase type-2 spans 2-191 (CGIWALFGSD…PGHYEVLDLK (190 aa)). L-glutamine contacts are provided by residues 49–53 (RLAVV), 75–77 (NGE), and Asp97. The 324-residue stretch at 213–536 (HAIYDSVEKL…PGRADWLTHY (324 aa)) folds into the Asparagine synthetase domain. ATP contacts are provided by residues Leu256, Ile288, and 363–364 (SG). Position 385 is an N6-acetyllysine (Lys385). Thr545 carries the phosphothreonine modification. Ser557 is subject to Phosphoserine.

The catalysed reaction is L-aspartate + L-glutamine + ATP + H2O = L-asparagine + L-glutamate + AMP + diphosphate + H(+). The protein operates within amino-acid biosynthesis; L-asparagine biosynthesis; L-asparagine from L-aspartate (L-Gln route): step 1/1. The chain is Asparagine synthetase [glutamine-hydrolyzing] (Asns) from Rattus norvegicus (Rat).